The sequence spans 145 residues: Procyclic form-specific polypeptide B-alpha (145 aa).

An N-terminal signal peptide occupies residues 1–27 (MAPRSLYLLAVLLFSANLFAGVGFAAA). Positions 28–127 (AEGPEDKGLT…PEPEPGAATL (100 aa)) are disordered. Basic and acidic residues predominate over residues 31–52 (PEDKGLTKGGKGKGEKGTKVGA). Repeat copies occupy residues 59–60 (DP), 61–62 (DP), 63–64 (EP), 65–66 (EP), 67–68 (EP), 69–70 (EP), 71–72 (EP), 73–74 (EP), 75–76 (EP), 77–78 (EP), 79–80 (EP), 81–82 (EP), 83–84 (EP), 85–86 (EP), 87–88 (EP), 89–90 (EP), 91–92 (EP), 93–94 (EP), 95–96 (EP), 97–98 (EP), 99–100 (EP), 101–102 (EP), 103–104 (EP), 105–106 (EP), 107–108 (EP), 109–110 (EP), 111–112 (EP), 113–114 (EP), 115–116 (EP), 117–118 (EP), 119–120 (EP), and 121–122 (EP). Residues 59–122 (DPDPEPEPEP…EPEPEPEPEP (64 aa)) form a 32 X 2 AA tandem repeats of [DE]-P region. Acidic residues predominate over residues 60-120 (PDPEPEPEPE…EPEPEPEPEP (61 aa)). A lipid anchor (GPI-anchor amidated glycine) is attached at Gly-123. A propeptide spanning residues 124 to 145 (AATLKSVALPFAIAAAALVAAF) is cleaved from the precursor.

It is found in the cell membrane. Its function is as follows. Major surface antigen of procyclic forms. This chain is Procyclic form-specific polypeptide B-alpha (PARPB), found in Trypanosoma brucei brucei.